A 733-amino-acid chain; its full sequence is Folic acid synthesis protein fol1 (733 aa).

DHNA stretches follow at residues 55 to 167 (VVVE…YAER) and 179 to 277 (IEFS…QIYR). Y281 carries the post-translational modification Phosphotyrosine. Positions 295 to 454 (NKIAYLSFGS…LPSQGIRLYS (160 aa)) are HPK. The Pterin-binding domain maps to 465 to 724 (ALTMGILNVT…DTKEMSKVVG (260 aa)). The tract at residues 467-733 (TMGILNVTPD…GMANAIRYVP (267 aa)) is DHPS. Residue N472 participates in Mg(2+) binding. (7,8-dihydropterin-6-yl)methyl diphosphate contacts are provided by residues T511, D546, N565, D637, K677, and 712 to 714 (RVH).

In the N-terminal section; belongs to the DHNA family. It in the central section; belongs to the HPPK family. The protein in the C-terminal section; belongs to the DHPS family. The cofactor is Mg(2+).

It localises to the cytoplasm. The catalysed reaction is 7,8-dihydroneopterin = 6-hydroxymethyl-7,8-dihydropterin + glycolaldehyde. It carries out the reaction 6-hydroxymethyl-7,8-dihydropterin + ATP = (7,8-dihydropterin-6-yl)methyl diphosphate + AMP + H(+). It catalyses the reaction (7,8-dihydropterin-6-yl)methyl diphosphate + 4-aminobenzoate = 7,8-dihydropteroate + diphosphate. Its pathway is cofactor biosynthesis; tetrahydrofolate biosynthesis; 2-amino-4-hydroxy-6-hydroxymethyl-7,8-dihydropteridine diphosphate from 7,8-dihydroneopterin triphosphate: step 3/4. The protein operates within cofactor biosynthesis; tetrahydrofolate biosynthesis; 2-amino-4-hydroxy-6-hydroxymethyl-7,8-dihydropteridine diphosphate from 7,8-dihydroneopterin triphosphate: step 4/4. It participates in cofactor biosynthesis; tetrahydrofolate biosynthesis; 7,8-dihydrofolate from 2-amino-4-hydroxy-6-hydroxymethyl-7,8-dihydropteridine diphosphate and 4-aminobenzoate: step 1/2. Catalyzes three sequential steps of tetrahydrofolate biosynthesis. This chain is Folic acid synthesis protein fol1 (fol1), found in Schizosaccharomyces pombe (strain 972 / ATCC 24843) (Fission yeast).